The following is a 429-amino-acid chain: Bifunctional protein GlmU (429 aa).

The segment at 1 to 223 (MKTSILILAA…EDEFMGINDK (223 aa)) is pyrophosphorylase. UDP-N-acetyl-alpha-D-glucosamine is bound by residues 8-11 (LAAG), lysine 22, and 81-82 (GT). Aspartate 102 lines the Mg(2+) pocket. Residues glycine 135, glutamate 149, asparagine 164, and asparagine 221 each contribute to the UDP-N-acetyl-alpha-D-glucosamine site. Asparagine 221 is a Mg(2+) binding site. The interval 224-244 (FELSIAENFMQEKIKKYWMQQ) is linker. An N-acetyltransferase region spans residues 245 to 429 (GVIFHLPQST…KDYYYKKFQK (185 aa)). Residues arginine 308 and lysine 325 each contribute to the UDP-N-acetyl-alpha-D-glucosamine site. Histidine 336 serves as the catalytic Proton acceptor. UDP-N-acetyl-alpha-D-glucosamine contacts are provided by tyrosine 339 and asparagine 350. Residues 359–360 (NY), serine 378, alanine 396, and arginine 413 contribute to the acetyl-CoA site.

It in the N-terminal section; belongs to the N-acetylglucosamine-1-phosphate uridyltransferase family. In the C-terminal section; belongs to the transferase hexapeptide repeat family. Homotrimer. Mg(2+) is required as a cofactor.

It localises to the cytoplasm. The enzyme catalyses alpha-D-glucosamine 1-phosphate + acetyl-CoA = N-acetyl-alpha-D-glucosamine 1-phosphate + CoA + H(+). It carries out the reaction N-acetyl-alpha-D-glucosamine 1-phosphate + UTP + H(+) = UDP-N-acetyl-alpha-D-glucosamine + diphosphate. It functions in the pathway nucleotide-sugar biosynthesis; UDP-N-acetyl-alpha-D-glucosamine biosynthesis; N-acetyl-alpha-D-glucosamine 1-phosphate from alpha-D-glucosamine 6-phosphate (route II): step 2/2. Its pathway is nucleotide-sugar biosynthesis; UDP-N-acetyl-alpha-D-glucosamine biosynthesis; UDP-N-acetyl-alpha-D-glucosamine from N-acetyl-alpha-D-glucosamine 1-phosphate: step 1/1. The protein operates within bacterial outer membrane biogenesis; LPS lipid A biosynthesis. In terms of biological role, catalyzes the last two sequential reactions in the de novo biosynthetic pathway for UDP-N-acetylglucosamine (UDP-GlcNAc). The C-terminal domain catalyzes the transfer of acetyl group from acetyl coenzyme A to glucosamine-1-phosphate (GlcN-1-P) to produce N-acetylglucosamine-1-phosphate (GlcNAc-1-P), which is converted into UDP-GlcNAc by the transfer of uridine 5-monophosphate (from uridine 5-triphosphate), a reaction catalyzed by the N-terminal domain. The chain is Bifunctional protein GlmU from Campylobacter jejuni subsp. jejuni serotype O:23/36 (strain 81-176).